We begin with the raw amino-acid sequence, 404 residues long: MSDSKEPRLQQLGLLEEEQLRGLGFRQTRGYKSLAGCLGHGVLVLQLLSFTLLAGLFVQVSKVPSSISQEQSRQDSIYQNLTQLKAAVGELSEKSKLQEIYQELTQLKAAVSELPEKSKQQEIYQELTQLKAAVSELPEKSKLQEIYQELTQLKAAVSELPEKSKLQEIYQELTRLKAAVGELPEKCKLQEIYQELTRLKAAVDELPEKSKLQEIYQELTQLKAAVGELPEKSRLQEIYQELTQLKAAVERLCHPCPWEWTFFQGNCYFISNSQRNWHDSITACQEVGAQLVVIKSAEEQNFLQLQSSRSNRFTWMGLSDLNQEGTWQWVDGSPLLPSFKQYWNRGEPNNVGEEDCAEFSGNGWNDDKCNLAKFWICKKSAASCSRDEEQFLSPAPATPNPPPA.

Over 1-37 the chain is Cytoplasmic; it reads MSDSKEPRLQQLGLLEEEQLRGLGFRQTRGYKSLAGC. 3 short sequence motifs (endocytosis signal) span residues 14-15, 16-18, and 31-34; these read LL, EEE, and YKSL. A helical; Signal-anchor for type II membrane protein transmembrane segment spans residues 38-58; that stretch reads LGHGVLVLQLLSFTLLAGLFV. Topologically, residues 59–404 are extracellular; sequence QVSKVPSSIS…APATPNPPPA (346 aa). Asparagine 80 carries an N-linked (GlcNAc...) asparagine glycan. Tandem repeats lie at residues 96-118, 119-141, 142-164, 165-187, 188-210, 211-233, and 234-257. A 7 X approximate tandem repeats region spans residues 96-257; sequence KLQEIYQELT…AVERLCHPCP (162 aa). 3 disulfides stabilise this stretch: cysteine 256–cysteine 267, cysteine 284–cysteine 377, and cysteine 356–cysteine 369. The C-type lectin domain maps to 263–378; sequence FQGNCYFISN…CNLAKFWICK (116 aa). Ca(2+)-binding residues include glutamate 347, asparagine 349, valine 351, glutamate 354, asparagine 365, and aspartate 366.

In terms of assembly, homotetramer. Interacts with C1QBP; the interaction is indicative for a C1q:C1QBP:CD209 signaling complex. Interacts with ICAM2 and ICAM3 by binding to mannose-like carbohydrates. Interacts (via C-type lectin domain) with CEACAM1 (via Lewis X moieties); this interaction is regulated by the glycosylation pattern of CEACAM1 on cell types and regulates contact between dendritic cells and neutrophils.

It localises to the membrane. Pathogen-recognition receptor expressed on the surface of immature dendritic cells (DCs) and involved in initiation of primary immune response. Thought to mediate the endocytosis of pathogens which are subsequently degraded in lysosomal compartments. The receptor returns to the cell membrane surface and the pathogen-derived antigens are presented to resting T-cells via MHC class II proteins to initiate the adaptive immune response. Probably recognizes in a calcium-dependent manner high mannose N-linked oligosaccharides in a variety of pathogen antigens. In terms of biological role, on DCs it is a high affinity receptor for ICAM2 and ICAM3 by binding to mannose-like carbohydrates. May act as a DC rolling receptor that mediates transendothelial migration of DC presursors from blood to tissues by binding endothelial ICAM2. Seems to regulate DC-induced T-cell proliferation by binding to ICAM3 on T-cells in the immunological synapse formed between DC and T-cells. This is CD209 antigen (CD209) from Pongo pygmaeus (Bornean orangutan).